A 368-amino-acid chain; its full sequence is Epoxyqueuosine reductase QueH (368 aa).

Residues Cys-6, Cys-7, Cys-87, and Cys-90 each contribute to the [4Fe-4S] cluster site. Cys-174 and Cys-176 are joined by a disulfide.

The protein belongs to the QueH family.

The enzyme catalyses epoxyqueuosine(34) in tRNA + AH2 = queuosine(34) in tRNA + A + H2O. The protein operates within tRNA modification; tRNA-queuosine biosynthesis. In terms of biological role, catalyzes the conversion of epoxyqueuosine (oQ) to queuosine (Q), which is a hypermodified base found in the wobble positions of tRNA(Asp), tRNA(Asn), tRNA(His) and tRNA(Tyr). The polypeptide is Epoxyqueuosine reductase QueH (Helicobacter pylori (strain ATCC 700392 / 26695) (Campylobacter pylori)).